The sequence spans 678 residues: DNA ligase (678 aa).

NAD(+) is bound by residues 36–40 (DAEYD), 85–86 (SL), and Glu-117. Catalysis depends on Lys-119, which acts as the N6-AMP-lysine intermediate. NAD(+)-binding residues include Arg-140, Glu-177, Lys-294, and Lys-318. Cys-412, Cys-415, Cys-430, and Cys-436 together coordinate Zn(2+). One can recognise a BRCT domain in the interval 595–678 (ADEQPLNGQT…NLLREHGIEV (84 aa)).

It belongs to the NAD-dependent DNA ligase family. LigA subfamily. Requires Mg(2+) as cofactor. Mn(2+) is required as a cofactor.

The enzyme catalyses NAD(+) + (deoxyribonucleotide)n-3'-hydroxyl + 5'-phospho-(deoxyribonucleotide)m = (deoxyribonucleotide)n+m + AMP + beta-nicotinamide D-nucleotide.. Functionally, DNA ligase that catalyzes the formation of phosphodiester linkages between 5'-phosphoryl and 3'-hydroxyl groups in double-stranded DNA using NAD as a coenzyme and as the energy source for the reaction. It is essential for DNA replication and repair of damaged DNA. The chain is DNA ligase from Marinobacter nauticus (strain ATCC 700491 / DSM 11845 / VT8) (Marinobacter aquaeolei).